The chain runs to 427 residues: MERDFLGAIGRKEEAAGKPEEHSDYRGGGGGASAAMQWQFPATKVGAASSAFMSFRSSAAAAREEDPKEAAVFDRFSLSGFRPPPRPSPGDAFDGAAAMKQRQFGFNGRQQYAAAAQHGHREQGVDSYGVAAPHHFPSPSPSPRHPVPFGHANPMLRVHSLPNVAGGSPYRNQSFSVGNSVAGSTVGVYGGPRDLQNPKVTQMTIFYDGLVNVFDNIPVEKAQELMLLASRASIPSPPSAARKSDSPISAAAKLTVPEALPARQIVVQKPEASVPLVSGVSNPITIVSQAVTLPKSSSSSNDSAGPKSGGLPLAVTPLSQASPSQPIPVATTNASAIMPRAVPQARKASLARFLEKRKERVSSVAPYPSSKSPLESSDTIGSPSTPSKSSCTDITPSTNNCEDSLCLGQPRNISFSSQEPPSTKLQI.

The span at 1–25 (MERDFLGAIGRKEEAAGKPEEHSDY) shows a compositional bias: basic and acidic residues. The segment at 1–33 (MERDFLGAIGRKEEAAGKPEEHSDYRGGGGGAS) is disordered. One can recognise a Tify domain in the interval 196 to 231 (QNPKVTQMTIFYDGLVNVFDNIPVEKAQELMLLASR). Composition is skewed to polar residues over residues 293 to 303 (LPKSSSSSNDS) and 317 to 327 (PLSQASPSQPI). The tract at residues 293 to 327 (LPKSSSSSNDSAGPKSGGLPLAVTPLSQASPSQPI) is disordered. The short motif at 343 to 367 (PQARKASLARFLEKRKERVSSVAPY) is the Jas element. A Nuclear localization signal motif is present at residues 345-352 (ARKASLAR). The interval 360–427 (RVSSVAPYPS…QEPPSTKLQI (68 aa)) is disordered. Polar residues-rich tracts occupy residues 369 to 402 (SSKS…NNCE) and 411 to 427 (RNIS…KLQI).

It belongs to the TIFY/JAZ family. Post-translationally, ubiquitinated.

It is found in the nucleus. In terms of biological role, repressor of jasmonate responses. In Oryza sativa subsp. indica (Rice), this protein is Protein TIFY 6a.